Here is a 556-residue protein sequence, read N- to C-terminus: Arginine--tRNA ligase (556 aa).

The 'HIGH' region motif lies at 132 to 142; it reads ANPTGDLHLGH.

It belongs to the class-I aminoacyl-tRNA synthetase family. In terms of assembly, monomer.

The protein resides in the cytoplasm. The enzyme catalyses tRNA(Arg) + L-arginine + ATP = L-arginyl-tRNA(Arg) + AMP + diphosphate. The sequence is that of Arginine--tRNA ligase from Listeria welshimeri serovar 6b (strain ATCC 35897 / DSM 20650 / CCUG 15529 / CIP 8149 / NCTC 11857 / SLCC 5334 / V8).